The chain runs to 294 residues: tRNA dimethylallyltransferase (294 aa).

10-17 (GPTAVGKT) is a binding site for ATP. 12–17 (TAVGKT) contacts substrate. Residues 35–38 (DSQQ) form an interaction with substrate tRNA region.

It belongs to the IPP transferase family. As to quaternary structure, monomer. Mg(2+) is required as a cofactor.

It catalyses the reaction adenosine(37) in tRNA + dimethylallyl diphosphate = N(6)-dimethylallyladenosine(37) in tRNA + diphosphate. Catalyzes the transfer of a dimethylallyl group onto the adenine at position 37 in tRNAs that read codons beginning with uridine, leading to the formation of N6-(dimethylallyl)adenosine (i(6)A). The chain is tRNA dimethylallyltransferase from Streptococcus sanguinis (strain SK36).